The sequence spans 770 residues: Formate acetyltransferase (770 aa).

In terms of domain architecture, PFL spans asparagine 5 to arginine 635. Cysteine 419 functions as the S-acetylcysteine intermediate in the catalytic mechanism. Catalysis depends on cysteine 420, which acts as the Cysteine radical intermediate. One can recognise a Glycine radical domain in the interval proline 642–methionine 770. Glycine 745 is subject to Glycine radical.

The protein belongs to the glycyl radical enzyme (GRE) family. PFL subfamily. Homodimer.

It is found in the cytoplasm. The enzyme catalyses formate + acetyl-CoA = pyruvate + CoA. It participates in fermentation; pyruvate fermentation; formate from pyruvate: step 1/1. Its function is as follows. Catalyzes the conversion of pyruvate to formate and acetyl-CoA. The chain is Formate acetyltransferase (pflB) from Haemophilus influenzae (strain ATCC 51907 / DSM 11121 / KW20 / Rd).